Here is a 101-residue protein sequence, read N- to C-terminus: Apolipoprotein C-II (101 aa).

The first 22 residues, Met1–Gly22, serve as a signal peptide directing secretion. The tract at residues Thr66–Met74 is lipid binding. The tract at residues Ser78–Asp101 is lipoprotein lipase cofactor.

It belongs to the apolipoprotein C2 family. Post-translationally, proapolipoprotein C-II is synthesized as a sialic acid containing glycoprotein which is subsequently desialylated prior to its proteolytic processing. In terms of processing, proapolipoprotein C-II, the major form found in plasma undergoes proteolytic cleavage of its N-terminal hexapeptide to generate apolipoprotein C-II, which occurs as the minor form in plasma.

Its subcellular location is the secreted. Its function is as follows. Component of chylomicrons, very low-density lipoproteins (VLDL), low-density lipoproteins (LDL), and high-density lipoproteins (HDL) in plasma. Plays an important role in lipoprotein metabolism as an activator of lipoprotein lipase. Both proapolipoprotein C-II and apolipoprotein C-II can activate lipoprotein lipase. The chain is Apolipoprotein C-II (APOC2) from Tapirus terrestris (Lowland tapir).